The following is a 370-amino-acid chain: Putative methylthioribose-1-phosphate isomerase (370 aa).

Substrate-binding positions include 66–68, arginine 109, and glutamine 217; that span reads RGA. The Proton donor role is filled by aspartate 258. 268–269 contributes to the substrate binding site; it reads NK.

The protein belongs to the eIF-2B alpha/beta/delta subunits family. MtnA subfamily.

It catalyses the reaction 5-(methylsulfanyl)-alpha-D-ribose 1-phosphate = 5-(methylsulfanyl)-D-ribulose 1-phosphate. In terms of biological role, catalyzes the interconversion of methylthioribose-1-phosphate (MTR-1-P) into methylthioribulose-1-phosphate (MTRu-1-P). This chain is Putative methylthioribose-1-phosphate isomerase, found in Aeropyrum pernix (strain ATCC 700893 / DSM 11879 / JCM 9820 / NBRC 100138 / K1).